Consider the following 317-residue polypeptide: 1-phosphatidylinositol phosphodiesterase (317 aa).

Positions 1–22 (MYKNYLQRTLVLLLCFILYFFT) are cleaved as a signal peptide. Residues 58 to 196 (LAALSIPGTH…LKDVRGKILL (139 aa)) form the PI-PLC X-box domain. The active-site Proton acceptor is H67. The active-site Proton donor is H115.

Monomer.

Its subcellular location is the secreted. The protein localises to the cytoplasm. It carries out the reaction a 1,2-diacyl-sn-glycero-3-phospho-(1D-myo-inositol) = 1D-myo-inositol 1,2-cyclic phosphate + a 1,2-diacyl-sn-glycerol. Functionally, cleaves glycosylphosphatidylinositol (GPI) and phosphatidylinositol (PI) anchors but not PI phosphates. Important factor in pathogenesis, PI-PLC activity is present only in virulent listeria species. It may participate in the lysis of the phagolysosomal membrane. The protein is 1-phosphatidylinositol phosphodiesterase (plcA) of Listeria monocytogenes serovar 1/2a (strain ATCC BAA-679 / EGD-e).